A 244-amino-acid polypeptide reads, in one-letter code: Carboxy-S-adenosyl-L-methionine synthase (244 aa).

S-adenosyl-L-methionine is bound by residues Tyr40, 65–67, 90–91, 119–120, Asn134, and Arg201; these read GCS, DN, and DL.

This sequence belongs to the class I-like SAM-binding methyltransferase superfamily. Cx-SAM synthase family. In terms of assembly, homodimer.

It catalyses the reaction prephenate + S-adenosyl-L-methionine = carboxy-S-adenosyl-L-methionine + 3-phenylpyruvate + H2O. In terms of biological role, catalyzes the conversion of S-adenosyl-L-methionine (SAM) to carboxy-S-adenosyl-L-methionine (Cx-SAM). The chain is Carboxy-S-adenosyl-L-methionine synthase from Geobacter metallireducens (strain ATCC 53774 / DSM 7210 / GS-15).